Here is a 458-residue protein sequence, read N- to C-terminus: Transcription factor bHLH10 (458 aa).

The interval 1–49 (MEEERESLYEEMGCFDPNTPAEVTVESSFSQAEPPPPPPQVLVAGSTSN) is disordered. The bHLH domain maps to 243 to 292 (SRKSRTSPTERERRVHFNDRFFDLKNLIPNPTKIDRASIVGEAIDYIKEL). Residues 315–338 (KRARVGEGGGGEDQEEEEDTVNYK) form a disordered region. The span at 324–334 (GGEDQEEEEDT) shows a compositional bias: acidic residues.

Homodimer.

The protein resides in the nucleus. This Arabidopsis thaliana (Mouse-ear cress) protein is Transcription factor bHLH10 (BHLH10).